Reading from the N-terminus, the 66-residue chain is Large ribosomal subunit protein bL31 (66 aa).

Residues cysteine 16, cysteine 18, cysteine 36, and cysteine 39 each contribute to the Zn(2+) site.

Belongs to the bacterial ribosomal protein bL31 family. Type A subfamily. Part of the 50S ribosomal subunit. The cofactor is Zn(2+).

In terms of biological role, binds the 23S rRNA. This chain is Large ribosomal subunit protein bL31, found in Bacillus licheniformis (strain ATCC 14580 / DSM 13 / JCM 2505 / CCUG 7422 / NBRC 12200 / NCIMB 9375 / NCTC 10341 / NRRL NRS-1264 / Gibson 46).